The sequence spans 305 residues: Protein FdhE homolog (305 aa).

This sequence belongs to the FdhE family.

Its subcellular location is the cytoplasm. Its function is as follows. Necessary for formate dehydrogenase activity. The sequence is that of Protein FdhE homolog from Actinobacillus pleuropneumoniae serotype 7 (strain AP76).